The primary structure comprises 111 residues: Antitoxin PrlF (111 aa).

Residues 12–59 (TTESKVTIRGQTTIPAPVREALKLKPGQDSIHYEILPGGQVFMCRLGD) enclose the SpoVT-AbrB domain.

Homodimer; forms a complex with YhaV with stoichiometry PrlF(2)-YhaV(4), possibly as a YhaV(2)-PrlF(2)-YhaV(2) complex like the MazFE complex. This complex is seen to dimerize in solution.

Its subcellular location is the cytoplasm. In terms of biological role, antitoxin component of a type II toxin-antitoxin (TA) system. Labile antitoxin that binds to the YhaV toxin and neutralizes its ribonuclease activity. Also acts as a transcription factor. The YhaV/PrlF complex binds the prlF-yhaV operon, probably negatively regulating its expression. Its function is as follows. Negatively regulates its own expression as well as relieving the export block imposed by high-level synthesis of the LamB-LacZ hybrid protein. Overexpression leads to increased doubling time and also suppresses a htrA (degP) null phenotype. This Escherichia coli (strain K12) protein is Antitoxin PrlF (prlF).